Consider the following 249-residue polypeptide: Triosephosphate isomerase (249 aa).

Residues asparagine 12 and lysine 14 each coordinate substrate. The residue at position 14 (lysine 14) is an N6-acetyllysine. Position 68 is a 3'-nitrotyrosine (tyrosine 68). Serine 80 carries the phosphoserine modification. Histidine 96 (electrophile) is an active-site residue. Serine 106 is modified (phosphoserine). Lysine 142 is covalently cross-linked (Glycyl lysine isopeptide (Lys-Gly) (interchain with G-Cter in SUMO1)). Lysine 149 is subject to N6-succinyllysine. Lysine 156 bears the N6-acetyllysine; alternate mark. Residue lysine 156 is modified to N6-succinyllysine; alternate. Glutamate 166 acts as the Proton acceptor in catalysis. At threonine 173 the chain carries Phosphothreonine. An N6-acetyllysine; alternate modification is found at lysine 194. Residue lysine 194 is modified to N6-succinyllysine; alternate. Lysine 194 bears the N6-methyllysine; alternate mark. Residue serine 198 is modified to Phosphoserine. Tyrosine 209 is modified (3'-nitrotyrosine). Serine 212 is subject to Phosphoserine. At threonine 214 the chain carries Phosphothreonine. Phosphoserine is present on serine 223. Lysine 238 carries the N6-acetyllysine modification.

The protein belongs to the triosephosphate isomerase family. Homodimer.

The protein resides in the cytoplasm. The enzyme catalyses dihydroxyacetone phosphate = methylglyoxal + phosphate. The catalysed reaction is D-glyceraldehyde 3-phosphate = dihydroxyacetone phosphate. It functions in the pathway carbohydrate degradation; glycolysis; D-glyceraldehyde 3-phosphate from glycerone phosphate: step 1/1. It participates in carbohydrate biosynthesis; gluconeogenesis. Functionally, triosephosphate isomerase is an extremely efficient metabolic enzyme that catalyzes the interconversion between dihydroxyacetone phosphate (DHAP) and D-glyceraldehyde-3-phosphate (G3P) in glycolysis and gluconeogenesis. Its function is as follows. It is also responsible for the non-negligible production of methylglyoxal a reactive cytotoxic side-product that modifies and can alter proteins, DNA and lipids. This Rattus norvegicus (Rat) protein is Triosephosphate isomerase (Tpi1).